A 329-amino-acid chain; its full sequence is uncharacterized protein (329 aa).

Residues 1–32 form the signal peptide; that stretch reads MSQDRGPRRPRRLEKCALISASATVLSLTASG. The N-palmitoyl cysteine moiety is linked to residue cysteine 33. Residue cysteine 33 is the site of S-diacylglycerol cysteine attachment.

The protein resides in the cell membrane. This is an uncharacterized protein from Streptomyces coelicolor (strain ATCC BAA-471 / A3(2) / M145).